A 256-amino-acid chain; its full sequence is Small ribosomal subunit protein eS1A (256 aa).

Ala-2 is subject to N-acetylalanine; partial.

This sequence belongs to the eukaryotic ribosomal protein eS1 family. As to quaternary structure, component of the small ribosomal subunit. Mature ribosomes consist of a small (40S) and a large (60S) subunit. The 40S subunit contains about 33 different proteins and 1 molecule of RNA (18S). The 60S subunit contains about 49 different proteins and 3 molecules of RNA (25S, 5.8S and 5S).

The protein localises to the cytoplasm. This Debaryomyces hansenii (strain ATCC 36239 / CBS 767 / BCRC 21394 / JCM 1990 / NBRC 0083 / IGC 2968) (Yeast) protein is Small ribosomal subunit protein eS1A.